We begin with the raw amino-acid sequence, 263 residues long: Small ribosomal subunit protein uS2 (263 aa).

A compositionally biased stretch (basic and acidic residues) spans 230 to 249 (GEALVNEEKEITDEEKKEVL). Residues 230–263 (GEALVNEEKEITDEEKKEVLDEAMSEEDFGEEQE) are disordered. The span at 250–263 (DEAMSEEDFGEEQE) shows a compositional bias: acidic residues.

Belongs to the universal ribosomal protein uS2 family.

The protein is Small ribosomal subunit protein uS2 of Campylobacter jejuni subsp. jejuni serotype O:2 (strain ATCC 700819 / NCTC 11168).